Consider the following 507-residue polypeptide: Phospho-2-dehydro-3-deoxyheptonate aldolase 2, chloroplastic (507 aa).

The protein belongs to the class-II DAHP synthase family.

The protein resides in the plastid. Its subcellular location is the chloroplast. It catalyses the reaction D-erythrose 4-phosphate + phosphoenolpyruvate + H2O = 7-phospho-2-dehydro-3-deoxy-D-arabino-heptonate + phosphate. The protein operates within metabolic intermediate biosynthesis; chorismate biosynthesis; chorismate from D-erythrose 4-phosphate and phosphoenolpyruvate: step 1/7. The chain is Phospho-2-dehydro-3-deoxyheptonate aldolase 2, chloroplastic (DHS2) from Arabidopsis thaliana (Mouse-ear cress).